Consider the following 101-residue polypeptide: Integration host factor subunit beta (101 aa).

The interval 62–84 (RNPKTGESVALPGKHVPHFKPGK) is disordered.

Belongs to the bacterial histone-like protein family. In terms of assembly, heterodimer of an alpha and a beta chain.

In terms of biological role, this protein is one of the two subunits of integration host factor, a specific DNA-binding protein that functions in genetic recombination as well as in transcriptional and translational control. The polypeptide is Integration host factor subunit beta (Stenotrophomonas maltophilia (strain K279a)).